The following is a 428-amino-acid chain: C4-dicarboxylate transport protein (428 aa).

The next 9 helical transmembrane spans lie at 8–28, 44–64, 76–96, 142–162, 184–204, 222–242, 289–309, 326–346, and 352–372; these read SLYF…HFYP, LIKM…IAGM, VALL…LVIV, IGAF…LFGF, VIFG…FGAM, LIVC…GSIA, VVGL…SIYL, IFHQ…AAGV, and IVLA…LALI.

This sequence belongs to the dicarboxylate/amino acid:cation symporter (DAACS) (TC 2.A.23) family.

The protein resides in the cell inner membrane. In terms of biological role, responsible for the transport of dicarboxylates such as succinate, fumarate, and malate from the periplasm across the membrane. The polypeptide is C4-dicarboxylate transport protein (Cronobacter sakazakii (strain ATCC BAA-894) (Enterobacter sakazakii)).